The following is a 288-amino-acid chain: uncharacterized protein (288 aa).

The span at 126-136 shows a compositional bias: low complexity; that stretch reads VAAPASTPVAP. Disordered regions lie at residues 126–227 and 258–288; these read VAAP…VTSV and KEKDQTAEESQEQPSLSLEETLVHDRISSEE. The span at 143–152 shows a compositional bias: basic and acidic residues; that stretch reads RKEFKNEKWK. Basic residues predominate over residues 153–162; that stretch reads DKKKQGRRRN. The span at 180–194 shows a compositional bias: acidic residues; that stretch reads VAEECLQESSSEEGD. The span at 278 to 288 shows a compositional bias: basic and acidic residues; that stretch reads TLVHDRISSEE.

Belongs to the chlamydial CPn_0623/CT_504/TC_0791 family.

This is an uncharacterized protein from Chlamydia trachomatis serovar D (strain ATCC VR-885 / DSM 19411 / UW-3/Cx).